The chain runs to 130 residues: Gonadotropin subunit beta-1 (130 aa).

The N-terminal stretch at 1-18 (MRMHFVVMVMLLPALMMA) is a signal peptide. 5 disulfide bridges follow: Cys-26/Cys-74, Cys-40/Cys-89, Cys-51/Cys-105, Cys-55/Cys-107, and Cys-110/Cys-117. An N-linked (GlcNAc...) asparagine glycan is attached at Asn-30.

This sequence belongs to the glycoprotein hormones subunit beta family. In terms of assembly, heterodimer of an alpha and a beta chain.

It localises to the secreted. Functionally, involved in gametogenesis and steroidogenesis. This Cyprinus carpio (Common carp) protein is Gonadotropin subunit beta-1 (cgba).